The following is a 476-amino-acid chain: MKFQGPLACLLLALCLGSGEAGPLQSGEESTGTNIGEALGHGLGDALSEGVGKAIGKEAGGAAGSKVSEALGQGTREAVGTGVRQVPGFGVADALGNRVGEAAHALGNTGHEIGRQAEDVIRHGADAVRGSWQGVPGHNGAWETSGGHGIFGSQGGLGGQGQGNPGGLGTPWVHGYPGNSAGSFGMNPQGAPWGQGGNGGPPNFGTNTQGAVAQPGYGSVRASNQNEGCTNPPPSGSGGGSSNSGGGSGSQSGSSGSGSNGDNNNGSSSGGSSSGSSSGGSSGGSSGGSSGNSGGSRGDSGSESSWGSSTGSSSGNHGGSGGGNGHKPGCEKPGNEARGSGESGIQNSETSPGMFNFDTFWKNFKSKLGFINWDAINKNQVPPPSTRALLYFSRLWEDFKQNTPFLNWKAIIEGADASSLQKRAGRDDQNYNYNQHAYPTAYGGKYSVKTPAKGGVSPSSSASRVQPGLLQWVKFW.

The first 21 residues, 1–21 (MKFQGPLACLLLALCLGSGEA), serve as a signal peptide directing secretion. Composition is skewed to gly residues over residues 153–169 (SQGG…GGLG), 193–202 (WGQGGNGGPP), 236–259 (GSGG…GSGS), and 268–298 (SSGG…GSRG). The segment at 153–351 (SQGGLGGQGQ…ESGIQNSETS (199 aa)) is disordered. Residues 299 to 315 (DSGSESSWGSSTGSSSG) are compositionally biased toward low complexity. Residues 316 to 326 (NHGGSGGGNGH) are compositionally biased toward gly residues.

Belongs to the dermokine family. Homooligomer. Seems to be able to homodimerize and homotrimerize. Post-translationally, O-glycosylated. As to expression, expressed in epidermis; in the spinous and granular layers and in placenta. Also found in the epithelia of the small intestine, macrophages of the lung and endothelial cells of the lung. Isoform 15 is expressed in epidermis and placenta. Isoform 1 is expressed in epidermis.

It is found in the secreted. Its function is as follows. May act as a soluble regulator of keratinocyte differentiation. The chain is Dermokine (DMKN) from Homo sapiens (Human).